Consider the following 344-residue polypeptide: MATPYVPVPMPIGNSASSFTTNRNQRSSSFGSVSTSSNSSKGQLEDSNMGNFKQTSVPDQMDNTSSVCSSPLIRTKFTGTASSIEYSTRPRDTEEQNPETVNWEDRPSTPTILGYEVMEERAKFTVYKILVKKTPEESWVVFRRYTDFSRLNDKLKEMFPGFRLALPPKRWFKDNYNADFLEDRQLGLQAFLQNLVAHKDIANCLAVREFLCLDDPPGPFDSLEESRAFCETLEETNYRLQKELLEKQKEMESLKKLLSEKQLHIDTLENRIRTLSLEPEESLDVSETEGEQILKVESSALEVDQDVLDEESRADNKPCLSFSEPENAVSEIEVAEVAYDAEED.

The span at 1–10 (MATPYVPVPM) shows a compositional bias: pro residues. 2 disordered regions span residues 1–66 (MATP…NTSS) and 81–107 (ASSI…EDRP). The span at 14 to 26 (NSASSFTTNRNQR) shows a compositional bias: polar residues. The segment covering 27–40 (SSSFGSVSTSSNSS) has biased composition (low complexity). The segment covering 41–66 (KGQLEDSNMGNFKQTSVPDQMDNTSS) has biased composition (polar residues). Residues 105 to 218 (DRPSTPTILG…EFLCLDDPPG (114 aa)) form the PX domain. Residues Arg-144, Thr-146, and Arg-184 each contribute to the a 1,2-diacyl-sn-glycero-3-phospho-(1D-myo-inositol-3-phosphate) site. A Phosphoserine modification is found at Ser-222. Residues 223 to 278 (LEESRAFCETLEETNYRLQKELLEKQKEMESLKKLLSEKQLHIDTLENRIRTLSLE) adopt a coiled-coil conformation.

This sequence belongs to the sorting nexin family. Homooligomer. Interacts with EGFR. In terms of tissue distribution, detected in placenta, lung, liver,heart and pancreas.

Its subcellular location is the early endosome membrane. The protein resides in the late endosome membrane. It localises to the cytoplasm. The protein localises to the lysosome. May be involved in several stages of intracellular trafficking. Plays a role in protein transport from early to late endosomes. Plays a role in protein transport to the lysosome. Promotes degradation of EGFR after EGF signaling. Plays a role in intracellular transport of vesicular stomatitis virus nucleocapsids from the endosome to the cytoplasm. The protein is Sorting nexin-16 (SNX16) of Homo sapiens (Human).